A 276-amino-acid polypeptide reads, in one-letter code: Natural cytotoxicity triggering receptor 2 (276 aa).

Residues 1–21 form the signal peptide; that stretch reads MAWRALHPLLLLLLLFPGSQA. The 99-residue stretch at 22-120 folds into the Ig-like domain; that stretch reads QSKAQVLQSV…IYRPSDNSVS (99 aa). Residues 22–192 lie on the Extracellular side of the membrane; it reads QSKAQVLQSV…LRPGPAAPIA (171 aa). 2 cysteine pairs are disulfide-bonded: cysteine 40-cysteine 109 and cysteine 55-cysteine 63. Composition is skewed to polar residues over residues 138 to 156 and 167 to 183; these read TSWTPRDLVSSQTQTQSCV and ESPSTIPVPSQPQNSTL. Residues 138-184 form a disordered region; sequence TSWTPRDLVSSQTQTQSCVPPTAGARQAPESPSTIPVPSQPQNSTLR. A glycan (N-linked (GlcNAc...) asparagine) is linked at asparagine 180. A helical transmembrane segment spans residues 193-213; that stretch reads LVPVFCGLLVAKSLVLSALLV. Over 214–276 the chain is Cytoplasmic; it reads WWGDIWWKTM…ISDDDDEHTL (63 aa).

Belongs to the natural cytotoxicity receptor (NCR) family. In terms of assembly, interacts with TYROBP/DAP12. Interacts with KMT2E isoform NKp44L. Selectively expressed by activated NK cells and by in vitro cultured (i.e. activated) TCRg/d lymphoid cells.

It localises to the cell membrane. In terms of biological role, cytotoxicity-activating receptor that may contribute to the increased efficiency of activated natural killer (NK) cells to mediate tumor cell lysis. The chain is Natural cytotoxicity triggering receptor 2 (NCR2) from Homo sapiens (Human).